A 926-amino-acid chain; its full sequence is Staphylococcal nuclease domain-containing protein 1 (926 aa).

Residues 1 to 17 (MATAANTATAAGAAKDA) are compositionally biased toward low complexity. Residues 1-24 (MATAANTATAAGAAKDAPPAPTKS) are disordered. 4 TNase-like domains span residues 23-167 (KSLS…KWSP), 195-333 (NPVK…QWQD), 346-505 (KDFS…LHAK), and 535-674 (LRTE…IWTN). The Tudor domain occupies 749-807 (TPKRGDLVAAQFTLDNQWYRAKVERVQGSNATVLYIDYGNKETLPTNRLAALPPAFSSE). The tract at residues 760–788 (FTLDNQWYRAKVERVQGSNATVLYIDYGN) is involved in dimethylarginine binding.

As to quaternary structure, associates with the RNA-induced silencing complex (RISC). Interacts with the RISC components AGO2, Fmr1 and vig. Interacts with piwi. In terms of tissue distribution, expressed in adult ovaries and testis (at protein level).

It localises to the cytoplasm. It is found in the nucleus. It carries out the reaction Endonucleolytic cleavage to nucleoside 3'-phosphates and 3'-phosphooligonucleotide end-products.. Its function is as follows. Endonuclease which shows activity towards both DNA and RNA substrates. Has a role in translation regulation throught its association with the with the RNA-induced silencing complex (RISC). Plays a role in spermatogenesis probably by negatively regulating piwi expression in the germline. Together with piwi, might be involved in transposon repression in the germline. This chain is Staphylococcal nuclease domain-containing protein 1, found in Drosophila melanogaster (Fruit fly).